Here is a 376-residue protein sequence, read N- to C-terminus: Cytoplasmic tRNA 2-thiolation protein 1 (376 aa).

It belongs to the TtcA family. CTU1/NCS6/ATPBD3 subfamily.

It is found in the cytoplasm. Its pathway is tRNA modification; 5-methoxycarbonylmethyl-2-thiouridine-tRNA biosynthesis. Its function is as follows. Plays a central role in 2-thiolation of mcm(5)S(2)U at tRNA wobble positions of tRNA(Lys), tRNA(Glu) and tRNA(Gln). Directly binds tRNAs and probably acts by catalyzing adenylation of tRNAs, an intermediate required for 2-thiolation. It is unclear whether it acts as a sulfurtransferase that transfers sulfur from thiocarboxylated URM1 onto the uridine of tRNAs at wobble position. Prior mcm(5) tRNA modification by the elongator complex is required for 2-thiolation. May also be involved in protein urmylation. The sequence is that of Cytoplasmic tRNA 2-thiolation protein 1 from Scheffersomyces stipitis (strain ATCC 58785 / CBS 6054 / NBRC 10063 / NRRL Y-11545) (Yeast).